A 201-amino-acid chain; its full sequence is 3-isopropylmalate dehydratase small subunit (201 aa).

The protein belongs to the LeuD family. LeuD type 1 subfamily. As to quaternary structure, heterodimer of LeuC and LeuD.

It carries out the reaction (2R,3S)-3-isopropylmalate = (2S)-2-isopropylmalate. It functions in the pathway amino-acid biosynthesis; L-leucine biosynthesis; L-leucine from 3-methyl-2-oxobutanoate: step 2/4. Its function is as follows. Catalyzes the isomerization between 2-isopropylmalate and 3-isopropylmalate, via the formation of 2-isopropylmaleate. This chain is 3-isopropylmalate dehydratase small subunit, found in Enterobacter sp. (strain 638).